A 62-amino-acid chain; its full sequence is Beta-defensin 10 (62 aa).

A signal peptide spans 1-22 (MRLHHLLLLLLLVVLSSGSGFT). Q23 is modified (pyrrolidone carboxylic acid). 3 disulfide bridges follow: C31–C60, C38–C53, and C43–C61.

Belongs to the beta-defensin family. In terms of tissue distribution, neutrophilic granules.

The protein localises to the secreted. Has bactericidal activity. Active against E.coli ML35 and S.aureus 502A. This chain is Beta-defensin 10 (DEFB10), found in Bos taurus (Bovine).